Reading from the N-terminus, the 258-residue chain is Nucleoprotein (258 aa).

Belongs to the tospovirus nucleocapsid protein family. In terms of assembly, homotrimer. Binds the viral genomic RNA.

The protein resides in the virion. Encapsidates the genome protecting it from nucleases. The encapsidated genomic RNA is termed the nucleocapsid (NC) and serves as template for transcription and replication. The NC have a helical organization. The sequence is that of Nucleoprotein (N) from Frankliniella occidentalis (Western flower thrips).